The sequence spans 378 residues: Actin-related protein 2/3 complex subunit 1A (378 aa).

7 WD repeats span residues 8 to 47, 53 to 92, 97 to 138, 143 to 182, 203 to 242, 257 to 295, and 331 to 375; these read RFAESITCHAWSPDLSMVALCPNNTEVHIYKSLSQDHWER, KHDQIVSGIDWSSKSNKIVTVSHDRNSYVWSLEGAEWVPT, RLNR…WVSK, RHESSVTSVAWHPNNVLLATTSTDGKCRVFSTFIKGVDTK, LSYSWAFGVKWSPSGNTLAYVGHSSMIYFVDDVGPSPLAQ, ISEKMVIGVGYDSNPMVFASDDTGIWSFIRYIGEKKAAS, and VHDN…QELG.

The protein belongs to the WD repeat ARPC1 family. In terms of assembly, component of the Arp2/3 complex composed of ARP2, ARP3, ARPC1/p41-ARC, ARPC2/p34-ARC, ARPC3/p21-ARC, ARPC4/p20-ARC and ARPC5/p16-ARC. Expressed at low levels in all tissues with a relatively highest expression in inflorescences.

It localises to the cytoplasm. Its subcellular location is the cytoskeleton. Functionally, functions as a component of the Arp2/3 complex which is involved in regulation of actin polymerization and together with an activating nucleation-promoting factor (NPF) mediates the formation of branched actin networks. Arp2/3 complex plays a critical role in the control of cell morphogenesis via the modulation of cell polarity development. The polypeptide is Actin-related protein 2/3 complex subunit 1A (ARPC1A) (Arabidopsis thaliana (Mouse-ear cress)).